We begin with the raw amino-acid sequence, 186 residues long: NADH-quinone oxidoreductase subunit C (186 aa).

The tract at residues 166–186 is disordered; that stretch reads DSLTPWKGVGRPSDPFDGRKE.

The protein belongs to the complex I 30 kDa subunit family. NDH-1 is composed of 14 different subunits. Subunits NuoB, C, D, E, F, and G constitute the peripheral sector of the complex.

Its subcellular location is the cell inner membrane. The catalysed reaction is a quinone + NADH + 5 H(+)(in) = a quinol + NAD(+) + 4 H(+)(out). In terms of biological role, NDH-1 shuttles electrons from NADH, via FMN and iron-sulfur (Fe-S) centers, to quinones in the respiratory chain. The immediate electron acceptor for the enzyme in this species is believed to be ubiquinone. Couples the redox reaction to proton translocation (for every two electrons transferred, four hydrogen ions are translocated across the cytoplasmic membrane), and thus conserves the redox energy in a proton gradient. In Neorickettsia sennetsu (strain ATCC VR-367 / Miyayama) (Ehrlichia sennetsu), this protein is NADH-quinone oxidoreductase subunit C.